The following is a 276-amino-acid chain: Malectin-A (276 aa).

The first 26 residues, 1 to 26 (MLSIRTVLGPLATILLTVLGPFGAHG), serve as a signal peptide directing secretion. Over 27–253 (SGLADKVIWA…TPNPYASDNS (227 aa)) the chain is Lumenal. Residues Tyr67, Tyr89, Tyr116, Phe117, and Asp186 each contribute to the a carbohydrate site. The disordered stretch occupies residues 204 to 247 (PMLQPHPGLEKKEEEEEEEEEEGSTSKKQINKNRVQSGPRTPNP). Over residues 216 to 226 (EEEEEEEEEEG) the composition is skewed to acidic residues. Residues 229-247 (SKKQINKNRVQSGPRTPNP) show a composition bias toward polar residues. A glycan (N-linked (GlcNAc...) asparagine) is linked at Asn252. The helical transmembrane segment at 254-274 (SLMFPILVAFGVFIPTLFCLC) threads the bilayer. At 275 to 276 (RL) the chain is on the cytoplasmic side.

Belongs to the malectin family. Widely expressed throughout development including the anterior neuroectoderm and neural crest at stages 18 and 20, and the retina, hatching gland, otic vesicle, epibranchial placodes, pronephros and tail tip of later states. At stage 41, expressed in the liver, pancreas, branchial arches and proctodeum. Expressed broadly in adults in fat, intestine, gall bladder, eye, muscle, kidney, stomach, liver, heart, pancreas and lung.

It is found in the endoplasmic reticulum membrane. Functionally, carbohydrate-binding protein with a strong ligand preference for Glc2-N-glycan. May play a role in the early steps of protein N-glycosylation. Can bind di- or higher oligomers but not monomers of glucose, including maltose, maltotriose, maltotetraose, maltoheptaose, nigerose, kojibose, cellobiose and isomaltose, although based on their subcellular locations, these are unlikely to all be physiological ligands. The sequence is that of Malectin-A from Xenopus laevis (African clawed frog).